The following is a 346-amino-acid chain: DnaJ protein ERDJ3B (346 aa).

A signal peptide spans 1-23 (MAIRWSELCIVLFALSYAICVLA). A J domain is found at 26–91 (SYYDVLQVPK…EKREIYNKYG (66 aa)). An N-linked (GlcNAc...) asparagine glycan is attached at asparagine 267.

In terms of assembly, interacts with SDF2 and MED37A/BIP1. N-glycosylated. As to expression, expressed in leaves, flower buds and flowers.

Its subcellular location is the endoplasmic reticulum lumen. Functionally, regulates protein folding in the endoplasmic reticulum (ER) lumen. Forms a complex in the ER with SDF2 and MED37A/BIP1 which is required for the proper accumulation and function of the surface-exposed leucine-rich repeat receptor kinases EFR involved in pathogen-associated molecular pattern (PAMP) triggered immunity. This is DnaJ protein ERDJ3B (ERDJ3B) from Arabidopsis thaliana (Mouse-ear cress).